The following is a 139-amino-acid chain: uncharacterized protein (139 aa).

The N-terminal stretch at M1–G32 is a signal peptide. A sHSP domain is found at S44–E139.

The protein belongs to the small heat shock protein (HSP20) family.

This is an uncharacterized protein from Bacillus subtilis (strain 168).